Consider the following 87-residue polypeptide: Small ribosomal subunit protein bS20 (87 aa).

The protein belongs to the bacterial ribosomal protein bS20 family.

In terms of biological role, binds directly to 16S ribosomal RNA. In Beijerinckia indica subsp. indica (strain ATCC 9039 / DSM 1715 / NCIMB 8712), this protein is Small ribosomal subunit protein bS20.